We begin with the raw amino-acid sequence, 388 residues long: Proteasomal ubiquitin receptor ADRM1 homolog rpn1302 (388 aa).

The 118-residue stretch at 15 to 132 (RGKYGLVSVK…SLINQLIADP (118 aa)) folds into the Pru domain. 2 disordered regions span residues 202–227 (RASS…EEAT) and 368–388 (SDGE…EKDE). Residues 368–377 (SDGEVEEEGD) are compositionally biased toward acidic residues. Basic and acidic residues predominate over residues 378 to 388 (VEMRESNEKDE).

It belongs to the ADRM1 family. Component of the 19S proteasome regulatory particle complex. The 2 S.pombe rpn13 homologs, rpn1301 and rpn1302 are present at a 0.2-1 ratio.

Its subcellular location is the cytoplasm. It localises to the nucleus. Component of the 26S proteasome, a multiprotein complex involved in the ATP-dependent degradation of ubiquitinated proteins. This complex plays a key role in the maintenance of protein homeostasis by removing misfolded or damaged proteins, which could impair cellular functions, and by removing proteins whose functions are no longer required. Therefore, the proteasome participates in numerous cellular processes, including cell cycle progression, apoptosis, or DNA damage repair. Within the complex, functions as a proteasomal ubiquitin receptor. The chain is Proteasomal ubiquitin receptor ADRM1 homolog rpn1302 (rpn1302) from Schizosaccharomyces pombe (strain 972 / ATCC 24843) (Fission yeast).